The following is a 251-amino-acid chain: MTDSATANGDDRDPEIELFVKAGIDGESIGNCPFSQRLFMILWLKGVVFNVTTVDLKRKPADLHNLAPGTHPPFLTFNGDVKTDVNKIEEFLEETLTPEKYPKLAARHRESNTAGIDIFSKFSAYIKNTKQQNNAALERGLTKALRKLDDYLNTPLPEEIDTNTHGDEKGSQRKFLDGDELTLADCNLLPKLHVVKIVAKKYRNYDIPAEMTGLWRYLKNAYARDEFTNTCAADSEIELAYADVARRLSRS.

A required for insertion into the membrane region spans residues 1-98; it reads MTDSATANGD…EEFLEETLTP (98 aa). The short motif at 32 to 35 is the G-site element; it reads CPFS. A helical membrane pass occupies residues 34-54; it reads FSQRLFMILWLKGVVFNVTTV. The 141-residue stretch at 101-241 folds into the GST C-terminal domain; that stretch reads YPKLAARHRE…AADSEIELAY (141 aa).

It belongs to the chloride channel CLIC family. As to quaternary structure, component of a multimeric complex consisting of several cytoskeletal proteins, including actin, ezrin, alpha-actinin, gelsolin, and IQGAP1. Interacts with AKAP9. Interacts with TPRN. TPRN, CLIC5 and PTPQR form concentric rings at the base of stereocilia and may form a complex. Interacts with EZR, MYO6 and RDX; the proteins may work together as a complex to stabilize linkages between the plasma membrane and subjacent actin cytoskeleton at the stereocilium base. As to expression, detected in cochlea, in cochlear and vestibular hair cell bundles in the organ of Corti (at protein level). Expressed neonatal and adult cardiomyocytes (at protein level).

It is found in the golgi apparatus. The protein localises to the cytoplasm. Its subcellular location is the cytoskeleton. It localises to the microtubule organizing center. The protein resides in the centrosome. It is found in the cell cortex. The protein localises to the membrane. Its subcellular location is the apical cell membrane. It localises to the mitochondrion. The protein resides in the cell projection. It is found in the stereocilium. The enzyme catalyses Na(+)(in) = Na(+)(out). The catalysed reaction is K(+)(in) = K(+)(out). It carries out the reaction chloride(in) = chloride(out). With respect to regulation, inhibited by F-actin. Its function is as follows. In the soluble state, catalyzes glutaredoxin-like thiol disulfide exchange reactions with reduced glutathione as electron donor. Can insert into membranes and form non-selective ion channels almost equally permeable to Na(+), K(+) and Cl(-). Required for normal hearing. It is necessary for the formation of stereocilia in the inner ear and normal development of the organ of Corti. May play a role in the regulation of transepithelial ion absorption and secretion. Is required for the development and/or maintenance of the proper glomerular endothelial cell and podocyte architecture. Plays a role in formation of the lens suture in the eye, which is important for normal optical properties of the lens. The sequence is that of Chloride intracellular channel protein 5 (Clic5) from Rattus norvegicus (Rat).